The following is a 115-amino-acid chain: MSVLTQVLALLLLWLTGARCDIQMTQSPASLSASVGETVTITCRASGNIHNYLAWYQQKQGKSPQLLVYNAKTLADGVPSRFSGSGSGTQYSLKINSLQPEDFGSYYCQHFWSTP.

Residues M1–C20 form the signal peptide. Residues D21 to C43 form a framework-1 region. A disulfide bond links C43 and C108. The segment at R44–A54 is complementarity-determining-1. Residues W55 to Y69 form a framework-2 region. Residues N70–D76 are complementarity-determining-2. The interval G77–C108 is framework-3. Residues Q109–P115 form a complementarity-determining-3 region.

This Mus musculus (Mouse) protein is Immunoglobulin kappa chain variable 12-41.